The sequence spans 729 residues: Phosphoribosylformylglycinamidine synthase subunit PurL (729 aa).

Residue His-42 is part of the active site. 2 residues coordinate ATP: Tyr-45 and Lys-84. A Mg(2+)-binding site is contributed by Glu-86. Residues 87–90 (SHNH) and Arg-109 contribute to the substrate site. The Proton acceptor role is filled by His-88. Asp-110 is a Mg(2+) binding site. Position 238 (Gln-238) interacts with substrate. Asp-266 serves as a coordination point for Mg(2+). 310 to 312 (ESQ) is a substrate binding site. ATP contacts are provided by Asp-492 and Gly-529. Asn-530 provides a ligand contact to Mg(2+). Ser-532 is a binding site for substrate.

Belongs to the FGAMS family. As to quaternary structure, monomer. Part of the FGAM synthase complex composed of 1 PurL, 1 PurQ and 2 PurS subunits.

Its subcellular location is the cytoplasm. It carries out the reaction N(2)-formyl-N(1)-(5-phospho-beta-D-ribosyl)glycinamide + L-glutamine + ATP + H2O = 2-formamido-N(1)-(5-O-phospho-beta-D-ribosyl)acetamidine + L-glutamate + ADP + phosphate + H(+). The protein operates within purine metabolism; IMP biosynthesis via de novo pathway; 5-amino-1-(5-phospho-D-ribosyl)imidazole from N(2)-formyl-N(1)-(5-phospho-D-ribosyl)glycinamide: step 1/2. Part of the phosphoribosylformylglycinamidine synthase complex involved in the purines biosynthetic pathway. Catalyzes the ATP-dependent conversion of formylglycinamide ribonucleotide (FGAR) and glutamine to yield formylglycinamidine ribonucleotide (FGAM) and glutamate. The FGAM synthase complex is composed of three subunits. PurQ produces an ammonia molecule by converting glutamine to glutamate. PurL transfers the ammonia molecule to FGAR to form FGAM in an ATP-dependent manner. PurS interacts with PurQ and PurL and is thought to assist in the transfer of the ammonia molecule from PurQ to PurL. This is Phosphoribosylformylglycinamidine synthase subunit PurL from Campylobacter concisus (strain 13826).